The chain runs to 90 residues: Small ribosomal subunit protein uS19 (90 aa).

It belongs to the universal ribosomal protein uS19 family.

Protein S19 forms a complex with S13 that binds strongly to the 16S ribosomal RNA. The polypeptide is Small ribosomal subunit protein uS19 (Mesomycoplasma hyopneumoniae (strain 232) (Mycoplasma hyopneumoniae)).